The following is a 545-amino-acid chain: CTP synthase (545 aa).

The tract at residues 1–265 (MNGIKHIFIT…DKFVIKHLDL (265 aa)) is amidoligase domain. Ser15 contributes to the CTP binding site. Ser15 is a UTP binding site. ATP is bound by residues 16 to 21 (SIGKGL) and Asp73. Mg(2+) is bound by residues Asp73 and Glu141. CTP-binding positions include 148–150 (DIE), 188–193 (KTKPTQ), and Lys224. UTP contacts are provided by residues 188 to 193 (KTKPTQ) and Lys224. Residues 290–534 (EIAIIGKYTG…VAAALARKEI (245 aa)) enclose the Glutamine amidotransferase type-1 domain. L-glutamine is bound at residue Gly349. Catalysis depends on Cys376, which acts as the Nucleophile; for glutamine hydrolysis. L-glutamine is bound by residues 377-380 (LGMQ), Glu400, and Arg460. Active-site residues include His507 and Glu509.

The protein belongs to the CTP synthase family. As to quaternary structure, homotetramer.

The enzyme catalyses UTP + L-glutamine + ATP + H2O = CTP + L-glutamate + ADP + phosphate + 2 H(+). It carries out the reaction L-glutamine + H2O = L-glutamate + NH4(+). The catalysed reaction is UTP + NH4(+) + ATP = CTP + ADP + phosphate + 2 H(+). It functions in the pathway pyrimidine metabolism; CTP biosynthesis via de novo pathway; CTP from UDP: step 2/2. Allosterically activated by GTP, when glutamine is the substrate; GTP has no effect on the reaction when ammonia is the substrate. The allosteric effector GTP functions by stabilizing the protein conformation that binds the tetrahedral intermediate(s) formed during glutamine hydrolysis. Inhibited by the product CTP, via allosteric rather than competitive inhibition. Its function is as follows. Catalyzes the ATP-dependent amination of UTP to CTP with either L-glutamine or ammonia as the source of nitrogen. Regulates intracellular CTP levels through interactions with the four ribonucleotide triphosphates. The protein is CTP synthase of Tropheryma whipplei (strain Twist) (Whipple's bacillus).